The chain runs to 296 residues: DNA-3-methyladenine glycosylase (296 aa).

Serine 110 is subject to Phosphoserine. Aspartate 209 serves as the catalytic Proton acceptor.

The protein belongs to the alkylbase DNA glycosidase AlkA family.

The protein localises to the nucleus. It carries out the reaction Hydrolysis of alkylated DNA, releasing 3-methyladenine, 3-methylguanine, 7-methylguanine and 7-methyladenine.. Functionally, hydrolysis of the deoxyribose N-glycosidic bond to excise 3-methyladenine or 7-methyladenine from the damaged DNA polymer formed by alkylation lesions. The polypeptide is DNA-3-methyladenine glycosylase (MAG1) (Saccharomyces cerevisiae (strain ATCC 204508 / S288c) (Baker's yeast)).